We begin with the raw amino-acid sequence, 248 residues long: Probable phosphatase VFMJ11_A0091 (248 aa).

Residues H8, H10, H16, H41, E74, H102, H132, D194, and H196 each coordinate Zn(2+).

Belongs to the PHP family. Zn(2+) is required as a cofactor.

This Aliivibrio fischeri (strain MJ11) (Vibrio fischeri) protein is Probable phosphatase VFMJ11_A0091.